Consider the following 127-residue polypeptide: Small ribosomal subunit protein uS13 (127 aa).

Positions 93–127 (RRGMPVRGQRTRTNARTRRGRRGQAIGIKKKATKK) are disordered.

It belongs to the universal ribosomal protein uS13 family. Part of the 30S ribosomal subunit. Forms a loose heterodimer with protein S19. Forms two bridges to the 50S subunit in the 70S ribosome.

Functionally, located at the top of the head of the 30S subunit, it contacts several helices of the 16S rRNA. In the 70S ribosome it contacts the 23S rRNA (bridge B1a) and protein L5 of the 50S subunit (bridge B1b), connecting the 2 subunits; these bridges are implicated in subunit movement. Contacts the tRNAs in the A and P-sites. This is Small ribosomal subunit protein uS13 from Chloroflexus aurantiacus (strain ATCC 29366 / DSM 635 / J-10-fl).